We begin with the raw amino-acid sequence, 490 residues long: GTPase Der (490 aa).

2 consecutive EngA-type G domains span residues 3 to 166 and 203 to 376; these read PVVA…MEDL and IKLA…DSST. GTP contacts are provided by residues 9–16, 56–60, 118–121, 209–216, 256–260, and 321–324; these read GRPNVGKS, DTGGI, NKTD, DTAGV, and NKWD. The KH-like domain occupies 377–461; the sequence is RRVGTSMLTR…PIRIQFKEGE (85 aa).

This sequence belongs to the TRAFAC class TrmE-Era-EngA-EngB-Septin-like GTPase superfamily. EngA (Der) GTPase family. In terms of assembly, associates with the 50S ribosomal subunit.

Its function is as follows. GTPase that plays an essential role in the late steps of ribosome biogenesis. In Escherichia coli O127:H6 (strain E2348/69 / EPEC), this protein is GTPase Der.